Reading from the N-terminus, the 143-residue chain is MNTPNPRVAKLADQIRVVVAETLERRVKDPRLGFVTITDVRLTGDSRDATLFWTAMGTDKEIAGTEAALESAKGMLRSTVGKRLKLRYAPTLTFVRDATPETAKSIEDALARAAASDAEIARRSQGAMPAGEADPYRHSDEEE.

The disordered stretch occupies residues Asp-117–Glu-143. The span at Asp-134–Glu-143 shows a compositional bias: basic and acidic residues.

The protein belongs to the RbfA family. As to quaternary structure, monomer. Binds 30S ribosomal subunits, but not 50S ribosomal subunits or 70S ribosomes.

It localises to the cytoplasm. In terms of biological role, one of several proteins that assist in the late maturation steps of the functional core of the 30S ribosomal subunit. Associates with free 30S ribosomal subunits (but not with 30S subunits that are part of 70S ribosomes or polysomes). Required for efficient processing of 16S rRNA. May interact with the 5'-terminal helix region of 16S rRNA. This Cutibacterium acnes (strain DSM 16379 / KPA171202) (Propionibacterium acnes) protein is Ribosome-binding factor A.